The chain runs to 271 residues: Neurexophilin-1 (271 aa).

The signal sequence occupies residues 1–21 (MQAACWYVLLLLQPTIYLVTC). The II stretch occupies residues 22–97 (ANLTNGGKSE…WDWLRNSTDL (76 aa)). N-linked (GlcNAc...) asparagine glycans are attached at residues Asn-23, Asn-68, Asn-93, Asn-146, Asn-156, and Asn-162. The segment at 98 to 176 (QEPRPRAKRR…LVPPTKIVEF (79 aa)) is III. The segment at 177-185 (DLAQQTVID) is IV (linker domain). Positions 186–271 (AKDSKSFNCR…HSDTPYFPSG (86 aa)) are v (Cys-rich).

The protein belongs to the neurexophilin family.

It localises to the secreted. Functionally, may be signaling molecules that resemble neuropeptides and that act by binding to alpha-neurexins and possibly other receptors. In Pongo abelii (Sumatran orangutan), this protein is Neurexophilin-1 (NXPH1).